Here is a 238-residue protein sequence, read N- to C-terminus: DNA repair protein RecO (238 aa).

It belongs to the RecO family.

Involved in DNA repair and RecF pathway recombination. This chain is DNA repair protein RecO, found in Hahella chejuensis (strain KCTC 2396).